Here is a 677-residue protein sequence, read N- to C-terminus: Pre-mRNA-splicing factor CLF1 (677 aa).

16 HAT repeats span residues 52 to 84 (EYQG…WELE), 86 to 118 (KEFR…AEMK), 120 to 152 (RNIN…MEEM), 154 to 185 (GNIP…LEKR), 187 to 218 (NEFD…FEEE), 220 to 255 (GTSD…YEAK), 257 to 291 (KEFE…FEKQ), 301 to 333 (VILS…LEES), 335 to 369 (GDVE…LWIF), 379 to 415 (KDME…FEIR), 417 to 448 (MDLQ…LERQ), 450 to 482 (FEFV…LERG), 484 to 518 (DDID…FEEY), 520 to 551 (GEYD…FEIN), 570 to 608 (EAKR…FEQT), and 613 to 646 (DDIA…YMFP).

It belongs to the crooked-neck family. As to quaternary structure, associated with the spliceosome.

The protein resides in the nucleus. Its function is as follows. Involved in pre-mRNA splicing and cell cycle progression. Required for the spliceosome assembly and initiation of the DNA replication. The polypeptide is Pre-mRNA-splicing factor CLF1 (CLF1) (Paracoccidioides brasiliensis).